Reading from the N-terminus, the 115-residue chain is NADH-ubiquinone oxidoreductase chain 3 (115 aa).

A run of 3 helical transmembrane segments spans residues 3–23 (LMLTLLTNTLLASLLVLIAFW), 55–75 (FFLVAITFLLFDLEIALLLPL), and 84–104 (LNTMLIMALVLISLLAISLAY).

Belongs to the complex I subunit 3 family. Core subunit of respiratory chain NADH dehydrogenase (Complex I) which is composed of 45 different subunits. Interacts with TMEM186. Interacts with TMEM242.

Its subcellular location is the mitochondrion inner membrane. It catalyses the reaction a ubiquinone + NADH + 5 H(+)(in) = a ubiquinol + NAD(+) + 4 H(+)(out). Core subunit of the mitochondrial membrane respiratory chain NADH dehydrogenase (Complex I) which catalyzes electron transfer from NADH through the respiratory chain, using ubiquinone as an electron acceptor. Essential for the catalytic activity of complex I. The chain is NADH-ubiquinone oxidoreductase chain 3 from Equus caballus (Horse).